Reading from the N-terminus, the 192-residue chain is UPF0316 protein SSP0880 (192 aa).

3 consecutive transmembrane segments (helical) span residues 8–28 (PWLM…CLTM), 40–60 (VAAI…GMVM), and 66–86 (IQNV…GMKI).

The protein belongs to the UPF0316 family.

Its subcellular location is the cell membrane. This is UPF0316 protein SSP0880 from Staphylococcus saprophyticus subsp. saprophyticus (strain ATCC 15305 / DSM 20229 / NCIMB 8711 / NCTC 7292 / S-41).